The sequence spans 521 residues: MDVANLASQLNATTILPEGVLVISLILVLLGDITFGRSSAKWTPYLAIASLAACLYLLYTQWDQANPIGFLGSFNADNLSIVFRAIIALSTLVTILMSVRYIEQSGSSIGEFMTVLLTATVGAMFLCGAEELVMIFISLETLSIASYLMTGYMKRDSRSNEAALKYLLIGAASSAVFLYGLSLLYGLSGGKTHLDDIALALTDTSKSLALVISLVFVIASVSFKIAAVPFHQWTPDVYEGSPTPVVAFLSVGSKAAGFALAIRLLTQAFPNLVEQWQFIFTALAILSMVLGNVVAIAQTSMKRMLAYSSIGQAGFVMIGLVIGTEAGYASMVFYLLIYLFMNLGAFTCVILFSLRTGTDEIGDYAGLYLKDPLLTLALSLCLLSLGGIPPLAGFFGKLYLFWAGWQAGAYGLVLLGLITSVVSIYYYIRVIKMMVVKEPQDMSEVIKNYPSIVWKPLGMRPLQVGLVLTLIATSLAGVLSNPLLTIVNSSVADVPRFKQATIPTSIDVAIQPDTPTIAPEL.

14 helical membrane passes run 15 to 35 (ILPEGVLVISLILVLLGDITF), 42 to 62 (WTPYLAIASLAACLYLLYTQW), 79 to 99 (LSIVFRAIIALSTLVTILMSV), 109 to 126 (IGEFMTVLLTATVGAMFL), 131 to 153 (ELVMIFISLETLSIASYLMTGYM), 167 to 187 (LLIGAASSAVFLYGLSLLYGL), 208 to 228 (LALVISLVFVIASVSFKIAAV), 242 to 262 (PTPVVAFLSVGSKAAGFALAI), 276 to 296 (WQFIFTALAILSMVLGNVVAI), 304 to 324 (MLAYSSIGQAGFVMIGLVIGT), 332 to 352 (VFYLLIYLFMNLGAFTCVILF), 376 to 396 (LALSLCLLSLGGIPPLAGFFG), 398 to 418 (LYLFWAGWQAGAYGLVLLGLI), and 464 to 484 (VGLVLTLIATSLAGVLSNPLL).

It belongs to the complex I subunit 2 family. As to quaternary structure, NDH-1 can be composed of about 15 different subunits; different subcomplexes with different compositions have been identified which probably have different functions.

Its subcellular location is the cellular thylakoid membrane. It catalyses the reaction a plastoquinone + NADH + (n+1) H(+)(in) = a plastoquinol + NAD(+) + n H(+)(out). The enzyme catalyses a plastoquinone + NADPH + (n+1) H(+)(in) = a plastoquinol + NADP(+) + n H(+)(out). Functionally, NDH-1 shuttles electrons from an unknown electron donor, via FMN and iron-sulfur (Fe-S) centers, to quinones in the respiratory and/or the photosynthetic chain. The immediate electron acceptor for the enzyme in this species is believed to be plastoquinone. Couples the redox reaction to proton translocation, and thus conserves the redox energy in a proton gradient. Cyanobacterial NDH-1 also plays a role in inorganic carbon-concentration. This is NAD(P)H-quinone oxidoreductase subunit 2 from Acaryochloris marina (strain MBIC 11017).